We begin with the raw amino-acid sequence, 249 residues long: MSLMREMLEAGVHFGHQTRYWNPKMAPYIFGHRNKIHIINLEQTVAKYQEATKFVKQLAARGGNILFVGTKRAARELVATEAERCGMPFVDARWLGGMLTNFKTVKSSIKRLKEMEVMVADGSVERLTKKEGLLFQRELDKLNKAIGGIKDMNGLPDALFVIDVGYHKIAVAEARTLGIPVVAVVDTNHSPDGVDYIIPGNDDSARAIALYAKGIADAVLEGREQNLNGLVEEIVEGEEEFVEVQDGQA.

The protein belongs to the universal ribosomal protein uS2 family.

The protein is Small ribosomal subunit protein uS2 of Bordetella avium (strain 197N).